A 146-amino-acid chain; its full sequence is MSDIQLNSLKPAEGAKHAKRRVGRGIGSGLGKTAGRGHKGQKSRSGGFHKVGFEGGQMPLQRRLPKRGFTPLGQHLYAEVRLSDLQRLDVEEIDVQALKAAGVVGQGVRYAKVIKSGELSRKVVLRGITATAGARAAVEAAGGSLA.

The interval 1–65 is disordered; the sequence is MSDIQLNSLK…GQMPLQRRLP (65 aa). Positions 24 to 34 are enriched in gly residues; the sequence is RGIGSGLGKTA.

The protein belongs to the universal ribosomal protein uL15 family. Part of the 50S ribosomal subunit.

In terms of biological role, binds to the 23S rRNA. The chain is Large ribosomal subunit protein uL15 from Bordetella avium (strain 197N).